A 523-amino-acid chain; its full sequence is Thiamine pathway transporter THI73 (523 aa).

Residues 1 to 79 (MKNMSQRSMD…LSPKVLRKVD (79 aa)) are Cytoplasmic-facing. The chain crosses the membrane as a helical span at residues 80 to 100 (LFILPFLCCTYLLMFLDKALL). Topologically, residues 101-118 (NYAASMGIKDHLKGNEFS) are extracellular. Residues 119 to 139 (NLGTIFSAAYIFMEPVVTYLI) traverse the membrane as a helical segment. At 140–141 (QK) the chain is on the cytoplasmic side. Residues 142-162 (FPISKILGTFITVWGIVLACH) traverse the membrane as a helical segment. The Extracellular segment spans residues 163–176 (AACKTYASLMVVRT). The chain crosses the membrane as a helical span at residues 177–197 (LLGLFESSSAVGCIAISGMYY). Topologically, residues 198–207 (TKSEQSARIG) are cytoplasmic. A helical membrane pass occupies residues 208–228 (FWATQAGTGYIVGGLISFGFL). The Extracellular segment spans residues 229 to 239 (HYHGTAFTSWQ). The chain crosses the membrane as a helical span at residues 240–260 (IMFLVVGLVTVAFGVLTFLYL). At 261–312 (PDNVTNAWFLNKEEKIQVVEHIRANQTGLETKKFKKQQVKELFLHDKFTWPM) the chain is on the cytoplasmic side. The helical transmembrane segment at 313–333 (LLLTACSQISTGAIGTFSVTI) threads the bilayer. Residues 334–345 (TGTFGFDKYETA) are Extracellular-facing. A helical membrane pass occupies residues 346-366 (LLQLPIGAITAMIILITTQML). Residues 367-371 (SRWGH) lie on the Cytoplasmic side of the membrane. Residues 372–392 (ITLITTSMYIPAIIGCIVLIS) form a helical membrane-spanning segment. Residues 393 to 400 (LPLSHKIG) are Extracellular-facing. The helical transmembrane segment at 401–421 (NLFSLYLLYSGSCVITNIYIW) threads the bilayer. Over 422-432 (NSCNTSGYTKR) the chain is Cytoplasmic. A helical transmembrane segment spans residues 433-452 (VFRNAITMIVYNVSCIIAPQ). Over 453–466 (MFRAYSAPRYIPAK) the chain is Extracellular. A helical transmembrane segment spans residues 467 to 487 (IALLVTQCVCVPLQLYIGYIC). The Cytoplasmic portion of the chain corresponds to 488-523 (KKENEKRDKEQEGQERKKYQFLDLTDIENRNFRYIY).

The protein belongs to the major facilitator superfamily. Allantoate permease family.

It is found in the endoplasmic reticulum membrane. Its subcellular location is the cell membrane. Its function is as follows. Transports either thiamine or, rather, a related metabolite involved in the thiamine biosynthesis pathway. The protein is Thiamine pathway transporter THI73 (THI73) of Saccharomyces cerevisiae (strain ATCC 204508 / S288c) (Baker's yeast).